Here is a 64-residue protein sequence, read N- to C-terminus: Cecropin-A (64 aa).

The first 22 residues, 1–22 (MNFSRIFFFVFACLTALAMVNA), serve as a signal peptide directing secretion. The propeptide at 23 to 26 (APEP) is removed by a dipeptidylpeptidase. Lys-63 carries the post-translational modification Lysine amide.

This sequence belongs to the cecropin family. A protein with the same sequence as cecropin A, but lacking the carboxyl blocking group, has been isolated and called cecropin C.

The protein localises to the secreted. Functionally, cecropins have lytic and antibacterial activity against several Gram-positive and Gram-negative bacteria. The protein is Cecropin-A of Hyalophora cecropia (Cecropia moth).